A 321-amino-acid chain; its full sequence is Methionyl-tRNA formyltransferase (321 aa).

111–114 (GLLP) serves as a coordination point for (6S)-5,6,7,8-tetrahydrofolate.

The protein belongs to the Fmt family.

The enzyme catalyses L-methionyl-tRNA(fMet) + (6R)-10-formyltetrahydrofolate = N-formyl-L-methionyl-tRNA(fMet) + (6S)-5,6,7,8-tetrahydrofolate + H(+). Functionally, attaches a formyl group to the free amino group of methionyl-tRNA(fMet). The formyl group appears to play a dual role in the initiator identity of N-formylmethionyl-tRNA by promoting its recognition by IF2 and preventing the misappropriation of this tRNA by the elongation apparatus. The chain is Methionyl-tRNA formyltransferase from Chlamydia abortus (strain DSM 27085 / S26/3) (Chlamydophila abortus).